We begin with the raw amino-acid sequence, 199 residues long: NAD(P)H dehydrogenase (quinone) (199 aa).

The region spanning 4–190 (ILVLYYSMYG…AIARFQGEHV (187 aa)) is the Flavodoxin-like domain. Residues 10–15 (SMYGHI) and 79–81 (TRF) contribute to the FMN site. Position 12 (Tyr-12) interacts with NAD(+). Trp-99 contacts substrate. Residues 114-119 (STGTGG) and His-134 contribute to the FMN site.

This sequence belongs to the WrbA family. It depends on FMN as a cofactor.

It catalyses the reaction a quinone + NADH + H(+) = a quinol + NAD(+). It carries out the reaction a quinone + NADPH + H(+) = a quinol + NADP(+). This chain is NAD(P)H dehydrogenase (quinone), found in Yersinia pseudotuberculosis serotype O:1b (strain IP 31758).